Consider the following 399-residue polypeptide: Subtilisin-like protease 1 (399 aa).

The first 19 residues, Met-1–Ala-19, serve as a signal peptide directing secretion. The propeptide occupies Ala-20–His-116. One can recognise an Inhibitor I9 domain in the interval Ser-34 to Val-115. Residues Ser-126–Ala-399 enclose the Peptidase S8 domain. Residues Asp-158 and His-190 each act as charge relay system in the active site. The disordered stretch occupies residues Gly-175–Met-198. N-linked (GlcNAc...) asparagine glycosylation is present at Asn-251. Positions Asn-282–Ser-294 are enriched in polar residues. The interval Asn-282–Ser-312 is disordered. The active-site Charge relay system is the Ser-345.

This sequence belongs to the peptidase S8 family.

The protein resides in the secreted. Functionally, secreted subtilisin-like serine protease with keratinolytic activity that contributes to pathogenicity. In Arthroderma benhamiae (Trichophyton mentagrophytes), this protein is Subtilisin-like protease 1 (SUB1).